Here is a 1825-residue protein sequence, read N- to C-terminus: Tail fiber protein (1825 aa).

4 coiled-coil regions span residues 393-466 (VDMS…NSLE), 681-701 (DGVQ…SQKV), 843-891 (KGDQ…NMLA), and 975-998 (DVAK…LQNI).

The protein resides in the virion. Structural protein, a component of a tail fiber. The protein is Tail fiber protein of Enterococcus faecalis (Streptococcus faecalis).